Consider the following 288-residue polypeptide: ATP phosphoribosyltransferase (288 aa).

It belongs to the ATP phosphoribosyltransferase family. Long subfamily. Mg(2+) serves as cofactor.

The protein localises to the cytoplasm. The enzyme catalyses 1-(5-phospho-beta-D-ribosyl)-ATP + diphosphate = 5-phospho-alpha-D-ribose 1-diphosphate + ATP. It functions in the pathway amino-acid biosynthesis; L-histidine biosynthesis; L-histidine from 5-phospho-alpha-D-ribose 1-diphosphate: step 1/9. Its activity is regulated as follows. Feedback inhibited by histidine. Its function is as follows. Catalyzes the condensation of ATP and 5-phosphoribose 1-diphosphate to form N'-(5'-phosphoribosyl)-ATP (PR-ATP). Has a crucial role in the pathway because the rate of histidine biosynthesis seems to be controlled primarily by regulation of HisG enzymatic activity. The chain is ATP phosphoribosyltransferase from Methanococcus maripaludis (strain DSM 14266 / JCM 13030 / NBRC 101832 / S2 / LL).